The primary structure comprises 154 residues: NADPH-dependent 7-cyano-7-deazaguanine reductase (154 aa).

The active-site Thioimide intermediate is the C52. D59 (proton donor) is an active-site residue. Substrate contacts are provided by residues 74–76 (VES) and 93–94 (HE).

This sequence belongs to the GTP cyclohydrolase I family. QueF type 1 subfamily.

It localises to the cytoplasm. The enzyme catalyses 7-aminomethyl-7-carbaguanine + 2 NADP(+) = 7-cyano-7-deazaguanine + 2 NADPH + 3 H(+). The protein operates within tRNA modification; tRNA-queuosine biosynthesis. Its function is as follows. Catalyzes the NADPH-dependent reduction of 7-cyano-7-deazaguanine (preQ0) to 7-aminomethyl-7-deazaguanine (preQ1). The protein is NADPH-dependent 7-cyano-7-deazaguanine reductase of Ruegeria sp. (strain TM1040) (Silicibacter sp.).